An 85-amino-acid polypeptide reads, in one-letter code: ATP synthase subunit c (85 aa).

2 helical membrane passes run 10–30 (IAVGIIVGLASLGTAIGFAIL) and 53–73 (FIIAGLLDAVPMIGIVIALLF).

Belongs to the ATPase C chain family. In terms of assembly, F-type ATPases have 2 components, F(1) - the catalytic core - and F(0) - the membrane proton channel. F(1) has five subunits: alpha(3), beta(3), gamma(1), delta(1), epsilon(1). F(0) has three main subunits: a(1), b(2) and c(10-14). The alpha and beta chains form an alternating ring which encloses part of the gamma chain. F(1) is attached to F(0) by a central stalk formed by the gamma and epsilon chains, while a peripheral stalk is formed by the delta and b chains.

Its subcellular location is the cell inner membrane. In terms of biological role, f(1)F(0) ATP synthase produces ATP from ADP in the presence of a proton or sodium gradient. F-type ATPases consist of two structural domains, F(1) containing the extramembraneous catalytic core and F(0) containing the membrane proton channel, linked together by a central stalk and a peripheral stalk. During catalysis, ATP synthesis in the catalytic domain of F(1) is coupled via a rotary mechanism of the central stalk subunits to proton translocation. Functionally, key component of the F(0) channel; it plays a direct role in translocation across the membrane. A homomeric c-ring of between 10-14 subunits forms the central stalk rotor element with the F(1) delta and epsilon subunits. The chain is ATP synthase subunit c from Aliivibrio salmonicida (strain LFI1238) (Vibrio salmonicida (strain LFI1238)).